The following is an 86-amino-acid chain: MIOREX complex component 7 (86 aa).

Associates with the mitochondrial ribosome.

Its subcellular location is the mitochondrion. Component of MIOREX complexes, large expressome-like assemblies of ribosomes with factors involved in all the steps of post-transcriptional gene expression. The sequence is that of MIOREX complex component 7 from Saccharomyces cerevisiae (strain ATCC 204508 / S288c) (Baker's yeast).